The sequence spans 201 residues: Superoxide dismutase [Fe] (201 aa).

Residues His-27, His-79, Asp-161, and His-165 each contribute to the Fe cation site.

This sequence belongs to the iron/manganese superoxide dismutase family. Homodimer. Fe cation is required as a cofactor.

It carries out the reaction 2 superoxide + 2 H(+) = H2O2 + O2. Destroys superoxide anion radicals which are normally produced within the cells and which are toxic to biological systems. In Synechococcus elongatus (strain ATCC 33912 / PCC 7942 / FACHB-805) (Anacystis nidulans R2), this protein is Superoxide dismutase [Fe] (sodB).